A 476-amino-acid chain; its full sequence is Angiotensinogen (476 aa).

The signal sequence occupies residues methionine 1–glycine 24. Residues asparagine 38, asparagine 161, asparagine 295, and asparagine 319 are each glycosylated (N-linked (GlcNAc...) asparagine). Cysteine 42 and cysteine 162 are disulfide-bonded.

This sequence belongs to the serpin family. In terms of processing, in response to low blood pressure, the enzyme renin/REN cleaves angiotensinogen to produce angiotensin-1. Angiotensin-1 is a substrate of ACE (angiotensin converting enzyme) that removes a dipeptide to yield the physiologically active peptide angiotensin-2. Angiotensin-1 and angiotensin-2 can be further processed to generate angiotensin-3, angiotensin-4. Angiotensin 1-9 is cleaved from angiotensin-1 by ACE2 and can be further processed by ACE to produce angiotensin 1-7, angiotensin 1-5 and angiotensin 1-4. Angiotensin 1-7 has also been proposed to be cleaved from angiotensin-2 by ACE2 or from angiotensin-1 by MME (neprilysin). Post-translationally, the disulfide bond is labile. Angiotensinogen is present in the circulation in a near 40:60 ratio with the oxidized disulfide-bonded form, which preferentially interacts with receptor-bound renin.

Its subcellular location is the secreted. In terms of biological role, essential component of the renin-angiotensin system (RAS), a potent regulator of blood pressure, body fluid and electrolyte homeostasis. Acts directly on vascular smooth muscle as a potent vasoconstrictor, affects cardiac contractility and heart rate through its action on the sympathetic nervous system, and alters renal sodium and water absorption through its ability to stimulate the zona glomerulosa cells of the adrenal cortex to synthesize and secrete aldosterone. Acts by binding to angiotensin receptors AGTR1 and AGTR2. Also binds the DEAR/FBXW7-AS1 receptor. Its function is as follows. Stimulates aldosterone release. Functionally, is a ligand for the G-protein coupled receptor MAS1. Has vasodilator and antidiuretic effects. Has an antithrombotic effect that involves MAS1-mediated release of nitric oxide from platelets. The chain is Angiotensinogen (AGT) from Pan troglodytes (Chimpanzee).